Consider the following 619-residue polypeptide: Coagulation factor X-activating enzyme heavy chain (619 aa).

The first 20 residues, 1–20, serve as a signal peptide directing secretion; that stretch reads MMQVLLVTISLAVFPYQGSS. The propeptide occupies 21-188; the sequence is IILESGNVND…SDKPIKKASQ (168 aa). The Peptidase M12B domain occupies 199–393; sequence IFIELVIIVD…YKPKCIFNPP (195 aa). Residues C215 and C251 are joined by a disulfide bond. Residues N216 and N257 are each glycosylated (N-linked (GlcNAc...) (complex) asparagine). Intrachain disulfides connect C308–C388, C348–C372, and C350–C355. H333 contacts Zn(2+). The active site involves E334. Residues H337 and H343 each contribute to the Zn(2+) site. 2 N-linked (GlcNAc...) (complex) asparagine glycosylation sites follow: N351 and N371. Residues 401-487 form the Disintegrin domain; sequence PPVCGNEIWE…ECPRDQLQQN (87 aa). Ca(2+) contacts are provided by V403, N406, I408, E410, E413, and D416. Cystine bridges form between C404–C433, C415–C428, C417–C423, C427–C450, C441–C447, C446–C472, C459–C479, C466–C498, C491–C503, C510–C560, C525–C571, C538–C548, C555–C597, and C591–C603. The D/ECD-tripeptide signature appears at 465–467; it reads ECD. Residues D467, V468, E470, D482, and Q483 each coordinate Ca(2+).

The protein belongs to the venom metalloproteinase (M12B) family. P-III subfamily. P-IIId sub-subfamily. Heterotrimer; disulfide-linked. The heterotrimer consists of 1 heavy chain and 2 light chains (lectins): LC1 and LC2. The cofactor is Zn(2+). In terms of processing, N-glycosylated; probably required for conformation. Removal of easily accessible sugars does not change its functional capacity, but removal of the core sugars with N-glycanase causes a virtually complete loss of enzyme activity, apparently as a result of major conformational changes in the molecule. Not O-glycosylated. Expressed by the venom gland.

Its subcellular location is the secreted. The catalysed reaction is Specifically activates several components of the blood clotting system, including coagulation factor X, coagulation factor IX and protein C by cleavage of Arg-|-Xaa bonds. Has no action on insulin B chain.. Its function is as follows. Catalytic subunit of blood coagulation factor X-activating enzyme. Activates coagulation factor X (F10) by cleaving the Arg-Ile bond and is also able to activate coagulation factor IX (F9) and protein S (PROS1) by specific cleavage of Arg-Ile and Arg-Val bonds. The chain is Coagulation factor X-activating enzyme heavy chain from Daboia siamensis (Eastern Russel's viper).